A 1442-amino-acid chain; its full sequence is Sulfite reductase [NADPH] subunit beta (1442 aa).

Residues 682 to 831 (LHVYYASDGG…AYSEWEPKLW (150 aa)) form the Flavodoxin-like domain. A Phosphoserine modification is found at Ser903. Cys1300, Cys1306, Cys1345, and Cys1349 together coordinate [4Fe-4S] cluster. Siroheme is bound at residue Cys1349.

The protein belongs to the nitrite and sulfite reductase 4Fe-4S domain family. In terms of assembly, alpha(2)-beta(2). The alpha component is a flavoprotein, the beta component is a hemoprotein. The cofactor is siroheme. Requires [4Fe-4S] cluster as cofactor.

The protein localises to the cytoplasm. The enzyme catalyses hydrogen sulfide + 3 NADP(+) + 3 H2O = sulfite + 3 NADPH + 4 H(+). It functions in the pathway sulfur metabolism; hydrogen sulfide biosynthesis; hydrogen sulfide from sulfite (NADPH route): step 1/1. In terms of biological role, catalyzes the reduction of sulfite to sulfide, one of several activities required for the biosynthesis of L-cysteine from sulfate. This Saccharomyces cerevisiae (strain ATCC 204508 / S288c) (Baker's yeast) protein is Sulfite reductase [NADPH] subunit beta (MET5).